The sequence spans 358 residues: Isopentenyl-diphosphate delta-isomerase (358 aa).

12–13 (RK) provides a ligand contact to substrate. FMN-binding positions include 69–71 (AMT), serine 99, and asparagine 128. Glutamine 158 provides a ligand contact to substrate. Mg(2+) is bound at residue glutamate 159. FMN is bound by residues lysine 190, threonine 220, 267–269 (GIR), and 288–289 (AG).

This sequence belongs to the IPP isomerase type 2 family. In terms of assembly, homooctamer. Dimer of tetramers. FMN serves as cofactor. Requires NADPH as cofactor. The cofactor is Mg(2+).

Its subcellular location is the cytoplasm. The enzyme catalyses isopentenyl diphosphate = dimethylallyl diphosphate. Involved in the biosynthesis of isoprenoids. Catalyzes the 1,3-allylic rearrangement of the homoallylic substrate isopentenyl (IPP) to its allylic isomer, dimethylallyl diphosphate (DMAPP). The protein is Isopentenyl-diphosphate delta-isomerase of Listeria welshimeri serovar 6b (strain ATCC 35897 / DSM 20650 / CCUG 15529 / CIP 8149 / NCTC 11857 / SLCC 5334 / V8).